Consider the following 33-residue polypeptide: Gastrin (33 aa).

Gln1 carries the pyrrolidone carboxylic acid modification. Sulfotyrosine is present on Tyr28. Phe33 is subject to Phenylalanine amide.

This sequence belongs to the gastrin/cholecystokinin family. Sulfation enhances proteolytic processing, and blocks peptide degradation. Levels of sulfation differ between proteolytically-cleaved gastrins and between tissues.

Its subcellular location is the secreted. Gastrin stimulates the stomach mucosa to produce and secrete hydrochloric acid and the pancreas to secrete its digestive enzymes. It also stimulates smooth muscle contraction and increases blood circulation and water secretion in the stomach and intestine. This chain is Gastrin (GAST), found in Macropus giganteus (Eastern gray kangaroo).